Here is a 492-residue protein sequence, read N- to C-terminus: N-succinylglutamate 5-semialdehyde dehydrogenase (492 aa).

Residue 220-225 (GSANTG) participates in NAD(+) binding. Active-site residues include Glu-243 and Cys-277.

Belongs to the aldehyde dehydrogenase family. AstD subfamily.

It carries out the reaction N-succinyl-L-glutamate 5-semialdehyde + NAD(+) + H2O = N-succinyl-L-glutamate + NADH + 2 H(+). The protein operates within amino-acid degradation; L-arginine degradation via AST pathway; L-glutamate and succinate from L-arginine: step 4/5. Its function is as follows. Catalyzes the NAD-dependent reduction of succinylglutamate semialdehyde into succinylglutamate. In Escherichia coli O139:H28 (strain E24377A / ETEC), this protein is N-succinylglutamate 5-semialdehyde dehydrogenase.